A 731-amino-acid polypeptide reads, in one-letter code: Catalase-peroxidase 2 (731 aa).

Residues 1–10 (MAETPNSDMS) are compositionally biased toward polar residues. The segment at 1 to 26 (MAETPNSDMSGATGGRSKRPKSNQDW) is disordered. A cross-link (tryptophyl-tyrosyl-methioninium (Trp-Tyr) (with M-244)) is located at residues 95-218 (WHSAGTYRTA…LGASVMGLIY (124 aa)). His-96 serves as the catalytic Proton acceptor. The segment at residues 218-244 (YVNPEGPDGNPDPEASAKNIRQTFDRM) is a cross-link (tryptophyl-tyrosyl-methioninium (Tyr-Met) (with W-95)). Heme b is bound at residue His-259.

As to quaternary structure, homodimer. Heme b serves as cofactor. In terms of processing, formation of the three residue Trp-Tyr-Met cross-link is important for the catalase, but not the peroxidase activity of the enzyme.

It catalyses the reaction H2O2 + AH2 = A + 2 H2O. The enzyme catalyses 2 H2O2 = O2 + 2 H2O. In terms of biological role, bifunctional enzyme with both catalase and broad-spectrum peroxidase activity. This chain is Catalase-peroxidase 2, found in Haloarcula marismortui (strain ATCC 43049 / DSM 3752 / JCM 8966 / VKM B-1809) (Halobacterium marismortui).